Reading from the N-terminus, the 447-residue chain is Citrate synthase-like protein oryE (447 aa).

Residues H331 and D387 contribute to the active site.

It belongs to the citrate synthase family.

It functions in the pathway secondary metabolite biosynthesis. Its function is as follows. Citrate synthase-like protein; part of the gene cluster that mediates the biosynthesis of oryzines, natural products with an unusual maleidride backbone. The two subunits of the fungal fatty acid synthase oryfasA and oryfasB probably form octenoic acid. This fatty acid is most likely activated by the acyl-CoA ligase oryP to give octenyl-CoA before the citrate synthase-like protein oryE catalyzes condensation with oxaloacetate to form tricarboxylic acid. The next steps of the pathways are conjectural, but a favorite possible route has been proposed, beginning with decarboxylation and concomitant dehydration by the decarboxylase oryM, followed by tautomerization, which may lead to the production of a diene intermediate. Reduction of this diene intermediate could give the known metabolite piliformic acid. On the pathway to oryzine B and oryzine A, however, hydroxylation of the diene by the alpha-ketoglutarate-dependent dioxygenase oryG and lactonisation by the lactonohydrolases oryH or oryL could give oryzine B directly. Finally, enoyl reduction by the dehydrogenase oryD would then convert oryzine B into oryzine A. The polypeptide is Citrate synthase-like protein oryE (Aspergillus oryzae (strain ATCC 42149 / RIB 40) (Yellow koji mold)).